The primary structure comprises 1161 residues: DNA-directed RNA polymerase subunit beta (1161 aa).

The protein belongs to the RNA polymerase beta chain family. The RNAP catalytic core consists of 2 alpha, 1 beta, 1 beta' and 1 omega subunit. When a sigma factor is associated with the core the holoenzyme is formed, which can initiate transcription.

The enzyme catalyses RNA(n) + a ribonucleoside 5'-triphosphate = RNA(n+1) + diphosphate. In terms of biological role, DNA-dependent RNA polymerase catalyzes the transcription of DNA into RNA using the four ribonucleoside triphosphates as substrates. In Streptomyces avermitilis (strain ATCC 31267 / DSM 46492 / JCM 5070 / NBRC 14893 / NCIMB 12804 / NRRL 8165 / MA-4680), this protein is DNA-directed RNA polymerase subunit beta.